Here is a 1694-residue protein sequence, read N- to C-terminus: Immunoglobulin A1 protease autotransporter (1694 aa).

Residues M1–A25 form the signal peptide. The Peptidase S6 domain occupies A26–T332. The active site involves S288. A disordered region spans residues V991–R1403. Residues T997 to E1021 are compositionally biased toward polar residues. The segment covering T1037–E1047 has biased composition (low complexity). Over residues S1049–Q1061 the composition is skewed to basic and acidic residues. Over residues K1082–S1095 the composition is skewed to polar residues. Composition is skewed to basic and acidic residues over residues E1104–I1124 and A1142–E1154. Polar residues-rich tracts occupy residues T1155–S1178 and V1199–Q1210. The span at P1211–Q1226 shows a compositional bias: basic and acidic residues. 3 stretches are compositionally biased toward polar residues: residues E1227–P1247, N1255–T1297, and T1308–S1336. Over residues E1352–D1370 the composition is skewed to low complexity. Over residues R1374–S1384 the composition is skewed to basic residues. One can recognise an Autotransporter domain in the interval N1442–F1694.

Its subcellular location is the periplasm. The protein resides in the secreted. It localises to the cell surface. The protein localises to the cell outer membrane. It carries out the reaction Cleavage of immunoglobulin A molecules at certain Pro-|-Xaa bonds in the hinge region. No small molecule substrates are known.. In terms of biological role, virulence factor; cleaves host immunoglobulin A producing intact Fc and Fab fragments. This is Immunoglobulin A1 protease autotransporter (iga) from Haemophilus influenzae (strain ATCC 51907 / DSM 11121 / KW20 / Rd).